Here is a 402-residue protein sequence, read N- to C-terminus: Major outer membrane porin (402 aa).

Residues 1 to 22 (MKKLLKSALLFAATGSALSLQA) form the signal peptide.

It belongs to the chlamydial porin (CP) (TC 1.B.2) family. As to quaternary structure, part of a disulfide cross-linked outer membrane complex (COMC) composed of the major outer membrane porin, the small cysteine-rich protein (OmcA) and the large cysteine-rich periplasmic protein (OmcB).

Its subcellular location is the cell outer membrane. In terms of biological role, in elementary bodies (EBs, the infectious stage, which is able to survive outside the host cell) provides the structural integrity of the outer envelope through disulfide cross-links with the small cysteine-rich protein and the large cysteine-rich periplasmic protein. It has been described in publications as the Sarkosyl-insoluble COMC (Chlamydia outer membrane complex), and serves as the functional equivalent of peptidoglycan. Functionally, permits diffusion of specific solutes through the outer membrane. The protein is Major outer membrane porin (ompA) of Chlamydia psittaci (Chlamydophila psittaci).